The following is a 56-amino-acid chain: Ferredoxin (56 aa).

4Fe-4S ferredoxin-type domains follow at residues 2–29 and 29–56; these read AYVI…AGDD and DKYV…PQPE. [4Fe-4S] cluster is bound by residues C9, C12, C15, C19, C38, C41, C44, and C48.

Requires [4Fe-4S] cluster as cofactor.

Functionally, ferredoxins are iron-sulfur proteins that transfer electrons in a wide variety of metabolic reactions. This Acetoanaerobium sticklandii (strain ATCC 12662 / DSM 519 / JCM 1433 / CCUG 9281 / NCIMB 10654 / HF) (Clostridium sticklandii) protein is Ferredoxin.